A 244-amino-acid polypeptide reads, in one-letter code: ATP synthase subunit 4, mitochondrial (244 aa).

Residues Met1 to Tyr35 constitute a mitochondrion transit peptide. The residue at position 144 (Ser144) is a Phosphoserine.

Belongs to the eukaryotic ATPase B chain family. F-type ATPases have 2 components, CF(1) - the catalytic core - and CF(0) - the membrane proton channel. In yeast, the dimeric form of ATP synthase consists of 17 polypeptides: alpha, beta, gamma, delta, epsilon, 4 (B), 5 (OSCP), 6 (A), 8, 9 (C), d, E (Tim11), f, g, h, i/j and k.

The protein resides in the mitochondrion. It is found in the mitochondrion inner membrane. Functionally, mitochondrial membrane ATP synthase (F(1)F(0) ATP synthase or Complex V) produces ATP from ADP in the presence of a proton gradient across the membrane which is generated by electron transport complexes of the respiratory chain. F-type ATPases consist of two structural domains, F(1) - containing the extramembraneous catalytic core, and F(0) - containing the membrane proton channel, linked together by a central stalk and a peripheral stalk. During catalysis, ATP synthesis in the catalytic domain of F(1) is coupled via a rotary mechanism of the central stalk subunits to proton translocation. Part of the complex F(0) domain and the peripheric stalk, which acts as a stator to hold the catalytic alpha(3)beta(3) subcomplex and subunit a/ATP6 static relative to the rotary elements. In Saccharomyces cerevisiae (strain ATCC 204508 / S288c) (Baker's yeast), this protein is ATP synthase subunit 4, mitochondrial (ATP4).